The primary structure comprises 515 residues: Bifunctional purine biosynthesis protein PurH (515 aa).

In terms of domain architecture, MGS-like spans 1-144 (MGRKALISVS…KNHKFVTIIV (144 aa)).

This sequence belongs to the PurH family.

The catalysed reaction is (6R)-10-formyltetrahydrofolate + 5-amino-1-(5-phospho-beta-D-ribosyl)imidazole-4-carboxamide = 5-formamido-1-(5-phospho-D-ribosyl)imidazole-4-carboxamide + (6S)-5,6,7,8-tetrahydrofolate. The enzyme catalyses IMP + H2O = 5-formamido-1-(5-phospho-D-ribosyl)imidazole-4-carboxamide. It participates in purine metabolism; IMP biosynthesis via de novo pathway; 5-formamido-1-(5-phospho-D-ribosyl)imidazole-4-carboxamide from 5-amino-1-(5-phospho-D-ribosyl)imidazole-4-carboxamide (10-formyl THF route): step 1/1. It functions in the pathway purine metabolism; IMP biosynthesis via de novo pathway; IMP from 5-formamido-1-(5-phospho-D-ribosyl)imidazole-4-carboxamide: step 1/1. This Persephonella marina (strain DSM 14350 / EX-H1) protein is Bifunctional purine biosynthesis protein PurH.